A 282-amino-acid chain; its full sequence is E3 ubiquitin-protein ligase SIAH1 (282 aa).

The segment covering 1-17 (MSRQTATALPTGTSKCP) has biased composition (polar residues). The tract at residues 1-22 (MSRQTATALPTGTSKCPPSQRV) is disordered. Ser19 bears the Phosphoserine; by ATM and ATR mark. The RING-type zinc finger occupies 41-76 (CPVCFDYVLPPILQCQSGHLVCSNCRPKLTCCPTCR). The segment at 90–282 (VANSVLFPCK…LGINVTISMC (193 aa)) is SBD. An SIAH-type zinc finger spans residues 93-153 (SVLFPCKYAS…VMPHLMHQHK (61 aa)). Zn(2+) is bound by residues Cys98, Cys105, His117, Cys121, Cys128, Cys135, His147, and His152.

The protein belongs to the SINA (Seven in absentia) family. In terms of assembly, homodimer. Component of some large E3 complex composed of UBE2D1, SIAH1, CACYBP/SIP, SKP1, APC and TBL1X. Interacts with UBE2I. Interacts with alpha-tubulin. Interacts with PEG10, which may inhibit its activity. Interacts with PEG3 and HIPK2. Interacts with group 1 glutamate receptors GRM1 and GRM5. Interacts with DAB1, which may inhibit its activity. Interacts with UBE2E2. Interacts with SNCAIP. Interacts with HIPK2; the interaction is promoted by DAZAP2 and results in SIAH1-mediated ubiquitination and subsequent proteasomal degradation of HIPK2. Interacts with DAZAP2; the interaction is decreased following phosphorylation of DAZAP2 by HIPK2. Interacts with GAPDH; leading to stabilize SIAH1. Interacts with Bassoon/BSN and Piccolo/PLCO; these interactions negatively regulate SIAH1 E3 ligase activity. Interacts with DCC. Interacts with AXIN1; catalyzes AXIN1 ubiquitination and subsequent proteasome-mediated ubiquitin-dependent degradation. In terms of processing, phosphorylated on Ser-19 by ATM and ATR. This phosphorylation disrupts SIAH1 interaction with HIPK2, and subsequent proteasomal degradation of HIPK2.

The protein resides in the cytoplasm. The protein localises to the nucleus. It carries out the reaction S-ubiquitinyl-[E2 ubiquitin-conjugating enzyme]-L-cysteine + [acceptor protein]-L-lysine = [E2 ubiquitin-conjugating enzyme]-L-cysteine + N(6)-ubiquitinyl-[acceptor protein]-L-lysine.. It functions in the pathway protein modification; protein ubiquitination. In terms of biological role, E3 ubiquitin-protein ligase that mediates ubiquitination and subsequent proteasomal degradation of target proteins. E3 ubiquitin ligases accept ubiquitin from an E2 ubiquitin-conjugating enzyme in the form of a thioester and then directly transfers the ubiquitin to targeted substrates. Mediates E3 ubiquitin ligase activity either through direct binding to substrates or by functioning as the essential RING domain subunit of larger E3 complexes. Triggers the ubiquitin-mediated degradation of many substrates, including proteins involved in transcription regulation (ELL2, MYB, POU2AF1, PML and RBBP8), a cell surface receptor (DCC), cytoplasmic signal transduction molecules (KLF10/TIEG1 and NUMB), an antiapoptotic protein (BAG1), a microtubule motor protein (KIF22), a protein involved in synaptic vesicle function in neurons (SYP), a structural protein (CTNNB1) and SNCAIP. Confers constitutive instability to HIPK2 through proteasomal degradation. It is thereby involved in many cellular processes such as apoptosis, tumor suppression, cell cycle, axon guidance, transcription, spermatogenesis and TNF-alpha signaling. Has some overlapping function with SIAH2. Induces apoptosis in cooperation with PEG3. Upon nitric oxid (NO) generation that follows apoptotic stimulation, interacts with S-nitrosylated GAPDH, mediating the translocation of GAPDH to the nucleus. GAPDH acts as a stabilizer of SIAH1, facilitating the degradation of nuclear proteins. Mediates ubiquitination and degradation of EGLN2 and EGLN3 in response to the unfolded protein response (UPR), leading to their degradation and subsequent stabilization of ATF4. Also part of the Wnt signaling pathway in which it mediates the Wnt-induced ubiquitin-mediated proteasomal degradation of AXIN1. This Rattus norvegicus (Rat) protein is E3 ubiquitin-protein ligase SIAH1 (Siah1).